Here is a 293-residue protein sequence, read N- to C-terminus: Cytochrome c biogenesis protein CcsA (293 aa).

Transmembrane regions (helical) follow at residues 12-32 (INIL…AKLT), 39-59 (VFSL…GMLL), 78-98 (LFLS…LSII), 99-119 (GAIG…ILPP), 142-162 (VMIF…IYVI), 216-236 (FISL…VWAN), 250-267 (TWAL…HIRI), and 273-293 (KIYA…VTWE).

It belongs to the CcmF/CycK/Ccl1/NrfE/CcsA family. May interact with Ccs1.

The protein localises to the plastid. The protein resides in the chloroplast thylakoid membrane. Required during biogenesis of c-type cytochromes (cytochrome c6 and cytochrome f) at the step of heme attachment. The sequence is that of Cytochrome c biogenesis protein CcsA from Cyanidium caldarium (Red alga).